Consider the following 277-residue polypeptide: N-acetylmuramic acid 6-phosphate etherase (277 aa).

The 164-residue stretch at 53–216 (IIPRVKKGGR…STTIMIELGR (164 aa)) folds into the SIS domain. Catalysis depends on Glu-81, which acts as the Proton donor. Glu-112 is an active-site residue.

The protein belongs to the GCKR-like family. MurNAc-6-P etherase subfamily. As to quaternary structure, homodimer.

The catalysed reaction is N-acetyl-D-muramate 6-phosphate + H2O = N-acetyl-D-glucosamine 6-phosphate + (R)-lactate. It participates in amino-sugar metabolism; N-acetylmuramate degradation. In terms of biological role, specifically catalyzes the cleavage of the D-lactyl ether substituent of MurNAc 6-phosphate, producing GlcNAc 6-phosphate and D-lactate. The polypeptide is N-acetylmuramic acid 6-phosphate etherase (Bacteroides thetaiotaomicron (strain ATCC 29148 / DSM 2079 / JCM 5827 / CCUG 10774 / NCTC 10582 / VPI-5482 / E50)).